A 193-amino-acid chain; its full sequence is 7-methyl-GTP pyrophosphatase (193 aa).

The Proton acceptor role is filled by aspartate 68.

The protein belongs to the Maf family. YceF subfamily. A divalent metal cation serves as cofactor.

The protein resides in the cytoplasm. It carries out the reaction N(7)-methyl-GTP + H2O = N(7)-methyl-GMP + diphosphate + H(+). Its function is as follows. Nucleoside triphosphate pyrophosphatase that hydrolyzes 7-methyl-GTP (m(7)GTP). May have a dual role in cell division arrest and in preventing the incorporation of modified nucleotides into cellular nucleic acids. This Chromobacterium violaceum (strain ATCC 12472 / DSM 30191 / JCM 1249 / CCUG 213 / NBRC 12614 / NCIMB 9131 / NCTC 9757 / MK) protein is 7-methyl-GTP pyrophosphatase.